A 146-amino-acid chain; its full sequence is Hemoglobin subunit beta (146 aa).

V1 is subject to N-acetylvaline. A Globin domain is found at 2 to 146 (HLTGEEKTAV…VANALAHKYH (145 aa)). T12 bears the Phosphothreonine mark. A Phosphoserine modification is found at S44. N6-acetyllysine is present on K59. Heme b is bound at residue H63. An N6-acetyllysine modification is found at K82. Position 92 (H92) interacts with heme b. An S-nitrosocysteine modification is found at C93. K144 carries the N6-acetyllysine modification.

The protein belongs to the globin family. Heterotetramer of two alpha chains and two beta chains. Red blood cells.

Functionally, involved in oxygen transport from the lung to the various peripheral tissues. The protein is Hemoglobin subunit beta (HBB) of Nasua nasua (Ring-tailed coati).